The primary structure comprises 167 residues: Leukotoxin-activating lysine-acyltransferase LktC serotype A11 (167 aa).

Active-site residues include H22 and D91.

Belongs to the RTX toxin acyltransferase family.

It localises to the cytoplasm. The catalysed reaction is a fatty acyl-[ACP] + L-lysyl-[protein] = N(6)-(fatty acyl)-L-lysyl-[protein] + holo-[ACP] + H(+). Its function is as follows. Involved in fatty acylation of the protoxin (LktA) at two internal lysine residues, thereby converting it to the active toxin. In Mannheimia haemolytica (Pasteurella haemolytica), this protein is Leukotoxin-activating lysine-acyltransferase LktC serotype A11 (lktC).